We begin with the raw amino-acid sequence, 331 residues long: DNA polymerase IV (331 aa).

One can recognise a UmuC domain in the interval 1–174 (FFAAVEMRDN…LPLAKIPGVG (174 aa)). Residue aspartate 92 participates in Mg(2+) binding. The active site involves glutamate 93.

The protein belongs to the DNA polymerase type-Y family. Monomer. Mg(2+) is required as a cofactor.

The protein localises to the cytoplasm. It carries out the reaction DNA(n) + a 2'-deoxyribonucleoside 5'-triphosphate = DNA(n+1) + diphosphate. Its function is as follows. Poorly processive, error-prone DNA polymerase involved in untargeted mutagenesis. Copies undamaged DNA at stalled replication forks, which arise in vivo from mismatched or misaligned primer ends. These misaligned primers can be extended by PolIV. Exhibits no 3'-5' exonuclease (proofreading) activity. May be involved in translesional synthesis, in conjunction with the beta clamp from PolIII. This chain is DNA polymerase IV, found in Escherichia fergusonii.